The primary structure comprises 1152 residues: MRKFNIRKVLDGLTAGSSSASQQQQQQQHPPGNREPEIQETLQSEHFQLCKTVRHGFPYQPSALAFDPVQKILAVGTQTGALRLFGRPGVECYCQHDSGAAVIQLQFLINEGALVSALADDTLHLWNLRQKRPAVLHSLKFCRERVTFCHLPFQSKWLYVGTERGNIHIVNVESFTLSGYVIMWNKAIELSSKAHPGPVVHISDNPMDEGKLLIGFESGTVVLWDLKSKKADYRYTYDEAIHSVAWHHEGKQFICSHSDGTLTIWNVRSPAKPVQTITPHGKQLKDGKKPEPCKPILKVELKTTRSGEPFIILSGGLSYDTVGRRPCLTVMHGKSTAVLEMDYSIVDFLTLCETPYPNDFQEPYAVVVLLEKDLVLIDLAQNGYPIFENPYPLSIHESPVTCCEYFADCPVDLIPALYSVGARQKRQGYSKKEWPINGGNWGLGAQSYPEIIITGHADGSVKFWDASAITLQVLYKLKTSKVFEKSRNKDDRQNTDIVDEDPYAIQIISWCPESRMLCIAGVSAHVIIYRFSKQEVLTEVIPMLEVRLLYEINDVDTPEGEQPPPLSTPVGSSNPQPIPPQSHPSTSSSSSDGLRDNVPCLKVKNSPLKQSPGYQTELVIQLVWVGGEPPQQITSLALNSSYGLVVFGNCNGIAMVDYLQKAVLLNLSTIELYGSNDPYRREPRSPRKSRQPSGAGLCDITEGTVVPEDRCKSPTSGSSSPHNSDDEQKVNNFIEKVKTQSRKFSKMVANDLAKMSRKLSLPTDLKPDLDVKDNSFSRSRSSSVTSIDKESRETISALHFCETLTRKADSSPSPCLWVGTTVGTAFVITLNLPPGPEQRLLQPVIVSPSGTILRLKGAILRMAFLDATGCLMSPAYEPWKEHNVAEEKDEKEKLKKRRPVSVSPSSSQEISENQYAVICSEKQAKVMSLPTQSCAYKQNITETSFVLRGDIVALSNSVCLACFCANGHIMTFSLPSLRPLLDVYYLPLTNMRIARTFCFANNGQALYLVSPTEIQRLTYSQETCENLQEMLGELFTPVETPEAPNRGFFKGLFGGGAQSLDREELFGESSSGKASRSLAQHIPGPGGIEGVKGAASGVVGELARARLALDERGQKLSDLEERTAAMMSSADSFSKHAHEMMLKYKDKKWYQF.

Positions 14 to 35 are disordered; it reads TAGSSSASQQQQQQQHPPGNRE. Residues 17 to 28 show a composition bias toward low complexity; the sequence is SSSASQQQQQQQ. WD repeat units lie at residues 62 to 95, 102 to 141, 146 to 182, 201 to 235, 241 to 273, 295 to 337, 345 to 379, 401 to 478, 506 to 620, and 634 to 696; these read SALA…CYCQ, VIQL…SLKF, VTFC…GYVI, HISD…DYRY, IHSV…PAKP, PILK…KSTA, IVDF…LIDL, TCCE…YKLK, QIIS…ELVI, and TSLA…SGAG. 2 disordered regions span residues 555–596 and 675–731; these read VDTP…GLRD and SNDP…QKVN. Serine 693 is modified (phosphoserine). Over residues 713-722 the composition is skewed to low complexity; that stretch reads SPTSGSSSPH. Residues serine 724 and serine 760 each carry the phosphoserine modification. At threonine 763 the chain carries Phosphothreonine. A Phosphoserine modification is found at serine 783. At threonine 785 the chain carries Phosphothreonine. The residue at position 786 (serine 786) is a Phosphoserine. WD repeat units follow at residues 795-852, 861-935, 940-984, and 998-1021; these read ISAL…SGTI, RMAF…QSCA, ITET…LDVY, and CFAN…TYSQ. The segment covering 883-893 has biased composition (basic and acidic residues); sequence NVAEEKDEKEK. The segment at 883–907 is disordered; it reads NVAEEKDEKEKLKKRRPVSVSPSSS. Residues serine 901 and serine 903 each carry the phosphoserine modification. At threonine 1040 the chain carries Phosphothreonine. 2 positions are modified to phosphoserine: serine 1059 and serine 1132. The v-SNARE coiled-coil homology domain occupies 1087–1147; that stretch reads GIEGVKGAAS…HEMMLKYKDK (61 aa).

Belongs to the WD repeat L(2)GL family. In terms of assembly, part of a complex that contains STX1, STXBP5, SNAP25 and SYT1. Interacts with STX1A and STX4A via its v-SNARE homology domain. Part of a complex that contains STXBP5, STX4A and SNAP23. As to expression, detected in heart, spleen, lung, skeletal muscle, liver and kidney (at protein level). Detected in brain, particularly in the olfactory bulb and in hippocampus. Detected in the tenia tecta and in the piriform layer of the brain cortex.

It localises to the cytoplasm. The protein localises to the cell membrane. It is found in the membrane. Its function is as follows. Plays a regulatory role in calcium-dependent exocytosis and neurotransmitter release. Inhibits membrane fusion between transport vesicles and the plasma membrane. May modulate the assembly of trans-SNARE complexes between transport vesicles and the plasma membrane. Competes with STXBP1 for STX1 binding. Inhibits translocation of GLUT4 from intracellular vesicles to the plasma membrane. This is Syntaxin-binding protein 5 (Stxbp5) from Mus musculus (Mouse).